A 432-amino-acid polypeptide reads, in one-letter code: Glutamate-1-semialdehyde 2,1-aminomutase 2 (432 aa).

Lysine 268 bears the N6-(pyridoxal phosphate)lysine mark.

The protein belongs to the class-III pyridoxal-phosphate-dependent aminotransferase family. HemL subfamily. As to quaternary structure, homodimer. Requires pyridoxal 5'-phosphate as cofactor.

It is found in the cytoplasm. The enzyme catalyses (S)-4-amino-5-oxopentanoate = 5-aminolevulinate. It functions in the pathway porphyrin-containing compound metabolism; protoporphyrin-IX biosynthesis; 5-aminolevulinate from L-glutamyl-tRNA(Glu): step 2/2. This Listeria innocua serovar 6a (strain ATCC BAA-680 / CLIP 11262) protein is Glutamate-1-semialdehyde 2,1-aminomutase 2.